A 125-amino-acid chain; its full sequence is uncharacterized protein (125 aa).

The chain crosses the membrane as a helical span at residues 7 to 29 (NCMFLYVYTDVCVRLCASIFYIM).

Its subcellular location is the membrane. This is an uncharacterized protein from Saccharomyces cerevisiae (strain ATCC 204508 / S288c) (Baker's yeast).